The primary structure comprises 500 residues: Zinc finger and BTB domain-containing protein 34 (500 aa).

Residues 32-96 (CDIIVHIQGQ…CYTGRMSLQL (65 aa)) enclose the BTB domain. Phosphoserine is present on S164. The segment at 164 to 209 (SPPYCSQGRQPTASSDLRMETTPSKALRSRLQEEGHSDRGSSGSVS) is disordered. A compositionally biased stretch (basic and acidic residues) spans 193 to 202 (RLQEEGHSDR). Glycyl lysine isopeptide (Lys-Gly) (interchain with G-Cter in SUMO2) cross-links involve residues K235 and K237. Basic and acidic residues predominate over residues 236 to 245 (VKMEKSDRPS). Disordered regions lie at residues 236–256 (VKMEKSDRPSCSDSSSLGDDG) and 341–360 (SDSEAMMNNPGYESSPRERS). 2 C2H2-type zinc fingers span residues 372–394 (LICIYCGKSFNQKGSLDRHMRLH) and 400–422 (FVCKFCGKKYTRKDQLEYHIRGH). Residue K426 forms a Glycyl lysine isopeptide (Lys-Gly) (interchain with G-Cter in SUMO2) linkage. The segment at 428–451 (FRCEICGKCFPFQGTLNQHLRKNH) adopts a C2H2-type 3 zinc-finger fold. At S463 the chain carries Phosphoserine. A Glycyl lysine isopeptide (Lys-Gly) (interchain with G-Cter in SUMO2) cross-link involves residue K474. The interval 478-500 (DASASEMGLDSRMEIHTVSDAPD) is disordered.

Expressed in several tissues, including heart, brain, thymus, skeletal muscle, small intestine, testis, kidney, placenta, peripheral blood cells and adult and fetal liver.

The protein localises to the nucleus. In terms of biological role, may be a transcriptional repressor. This is Zinc finger and BTB domain-containing protein 34 (ZBTB34) from Homo sapiens (Human).